A 296-amino-acid polypeptide reads, in one-letter code: Phosphoribosylaminoimidazole-succinocarboxamide synthase (296 aa).

This sequence belongs to the SAICAR synthetase family.

The catalysed reaction is 5-amino-1-(5-phospho-D-ribosyl)imidazole-4-carboxylate + L-aspartate + ATP = (2S)-2-[5-amino-1-(5-phospho-beta-D-ribosyl)imidazole-4-carboxamido]succinate + ADP + phosphate + 2 H(+). It participates in purine metabolism; IMP biosynthesis via de novo pathway; 5-amino-1-(5-phospho-D-ribosyl)imidazole-4-carboxamide from 5-amino-1-(5-phospho-D-ribosyl)imidazole-4-carboxylate: step 1/2. The polypeptide is Phosphoribosylaminoimidazole-succinocarboxamide synthase (Geobacter sp. (strain M21)).